Here is a 238-residue protein sequence, read N- to C-terminus: Aspartate/glutamate leucyltransferase (238 aa).

Belongs to the R-transferase family. Bpt subfamily.

The protein resides in the cytoplasm. The catalysed reaction is N-terminal L-glutamyl-[protein] + L-leucyl-tRNA(Leu) = N-terminal L-leucyl-L-glutamyl-[protein] + tRNA(Leu) + H(+). The enzyme catalyses N-terminal L-aspartyl-[protein] + L-leucyl-tRNA(Leu) = N-terminal L-leucyl-L-aspartyl-[protein] + tRNA(Leu) + H(+). Its function is as follows. Functions in the N-end rule pathway of protein degradation where it conjugates Leu from its aminoacyl-tRNA to the N-termini of proteins containing an N-terminal aspartate or glutamate. This chain is Aspartate/glutamate leucyltransferase, found in Shewanella sp. (strain MR-4).